Reading from the N-terminus, the 164-residue chain is Cyclin-dependent kinase inhibitor 1 (164 aa).

Position 2 is an N-acetylserine (serine 2). A Glycyl serine ester (Ser-Gly) (interchain with G-Cter in ubiquitin) cross-link involves residue serine 2. The C4-type zinc finger occupies 13–41 (HGSKACRRLFGPVDSEQLRRDCDALMAGC). Residues 17 to 24 (ACRRLFGP) are required for binding cyclins. A required for binding CDKs region spans residues 53 to 58 (FVTETP). The tract at residues 80 to 164 (AGPRGGRDDL…RRLIFSKRKP (85 aa)) is disordered. The residue at position 114 (serine 114) is a Phosphoserine; by GSK3-beta. The residue at position 130 (serine 130) is a Phosphoserine. Positions 140–164 (RKRRQTSMTDFYHSKRRLIFSKRKP) match the PIP-box K+4 motif motif. The Nuclear localization signal motif lies at 141–156 (KRRQTSMTDFYHSKRR). Threonine 145 carries the post-translational modification Phosphothreonine; by PKA, PKB/AKT1, PIM1 and PIM2. Phosphoserine; by PKC and NUAK1 is present on serine 146. Residues 152 to 164 (HSKRRLIFSKRKP) are interaction with TRIM39. The span at 153–164 (SKRRLIFSKRKP) shows a compositional bias: basic residues. Serine 160 bears the Phosphoserine mark.

It belongs to the CDI family. In terms of assembly, interacts with HDAC1; the interaction is prevented by competitive binding of C10orf90/FATS to HDAC1 facilitating acetylation and protein stabilization of CDKN1A/p21. Interacts with MKRN1. Interacts with PSMA3. Interacts with PCNA. Component of the ternary complex, cyclin D-CDK4-CDKN1A. Interacts (via its N-terminal domain) with CDK4; the interaction promotes the assembly of the cyclin D-CDK4 complex, its nuclear translocation and promotes the cyclin D-dependent enzyme activity of CDK4. Binding to CDK2 leads to CDK2/cyclin E inactivation at the G1-S phase DNA damage checkpoint, thereby arresting cells at the G1-S transition during DNA repair. Interacts with PIM1. Interacts with STK11 and NUAK1. Interacts with DTL and TRIM39. Interacts with PKP3; the interaction sequesters CDKN1A to the cytoplasm thereby repressing its role as an inhibitor of CDK4- and CDK6-driven RB1 phosphorylation. Post-translationally, phosphorylation of Thr-145 by Akt or of Ser-146 by PKC impairs binding to PCNA. Phosphorylation at Ser-114 by GSK3-beta enhances ubiquitination by the DCX(DTL) complex. Phosphorylation of Thr-145 by PIM2 enhances protein stability and inhibits cell proliferation. Phosphorylation of Thr-145 by PIM1 results in the relocation of CDKN1A to the cytoplasm and enhanced CDKN1A protein stability. UV radiation-induced phosphorylation at Ser-146 by NUAK1 leads to its degradation. Ubiquitinated by MKRN1; leading to polyubiquitination and 26S proteasome-dependent degradation. Ubiquitinated by the DCX(DTL) complex, also named CRL4(CDT2) complex, leading to its degradation during S phase or following UV irradiation. Ubiquitination by the DCX(DTL) complex is essential to control replication licensing and is PCNA-dependent: interacts with PCNA via its PIP-box, while the presence of the containing the 'K+4' motif in the PIP box, recruit the DCX(DTL) complex, leading to its degradation. Ubiquitination at Ser-2 leads to degradation by the proteasome pathway. Ubiquitinated by RNF114; leading to proteasomal degradation. In terms of processing, acetylation leads to protein stability. Acetylated in vitro on Lys-141, Lys-154, Lys-161 and Lys-163. Deacetylation by HDAC1 is prevented by competitive binding of C10orf90/FATS to HDAC1.

The protein localises to the cytoplasm. The protein resides in the nucleus. May be involved in p53/TP53 mediated inhibition of cellular proliferation in response to DNA damage. Binds to and inhibits cyclin-dependent kinase activity, preventing phosphorylation of critical cyclin-dependent kinase substrates and blocking cell cycle progression. Functions in the nuclear localization and assembly of cyclin D-CDK4 complex and promotes its kinase activity towards RB1. At higher stoichiometric ratios, inhibits the kinase activity of the cyclin D-CDK4 complex. Inhibits DNA synthesis by DNA polymerase delta by competing with POLD3 for PCNA binding. Plays an important role in controlling cell cycle progression and DNA damage-induced G2 arrest. Negatively regulates the CDK4- and CDK6-driven phosphorylation of RB1 in keratinocytes, thereby resulting in the release of E2F1 and subsequent transcription of E2F1-driven G1/S phase promoting genes. This Felis catus (Cat) protein is Cyclin-dependent kinase inhibitor 1 (CDKN1A).